Reading from the N-terminus, the 115-residue chain is Holo-[acyl-carrier-protein] synthase (115 aa).

Positions 5 and 50 each coordinate Mg(2+).

The protein belongs to the P-Pant transferase superfamily. AcpS family. Mg(2+) serves as cofactor.

The protein localises to the cytoplasm. The enzyme catalyses apo-[ACP] + CoA = holo-[ACP] + adenosine 3',5'-bisphosphate + H(+). Its function is as follows. Transfers the 4'-phosphopantetheine moiety from coenzyme A to a Ser of acyl-carrier-protein. The polypeptide is Holo-[acyl-carrier-protein] synthase (Campylobacter fetus subsp. fetus (strain 82-40)).